A 493-amino-acid polypeptide reads, in one-letter code: Activin receptor type-1C (493 aa).

The N-terminal stretch at methionine 1–glycine 25 is a signal peptide. Residues leucine 26–glutamate 113 lie on the Extracellular side of the membrane. The helical transmembrane segment at leucine 114–tryptophan 134 threads the bilayer. Topologically, residues alanine 135–alanine 493 are cytoplasmic. The GS domain occupies lysine 165–threonine 194. Positions isoleucine 195 to leucine 485 constitute a Protein kinase domain. ATP is bound by residues valine 201–valine 209 and lysine 222. The active-site Proton acceptor is the aspartate 323.

It belongs to the protein kinase superfamily. TKL Ser/Thr protein kinase family. TGFB receptor subfamily. Binds the type 2 receptor protein ACVR2A. Mg(2+) is required as a cofactor. It depends on Mn(2+) as a cofactor. Expressed in brain, kidney, lung, liver, testis, ovary, adrenal gland, heart, prostate, gastrointestinal tract, and spleen. Distributed throughout both adult and embryonic central nervous system and pancreatic islet cells.

It localises to the membrane. It carries out the reaction L-threonyl-[receptor-protein] + ATP = O-phospho-L-threonyl-[receptor-protein] + ADP + H(+). It catalyses the reaction L-seryl-[receptor-protein] + ATP = O-phospho-L-seryl-[receptor-protein] + ADP + H(+). In terms of biological role, serine/threonine protein kinase which forms a receptor complex on ligand binding. The receptor complex consists of 2 type II and 2 type I transmembrane serine/threonine kinases. Type II receptors phosphorylate and activate type I receptors which autophosphorylate, then bind and activate SMAD transcriptional regulators, SMAD2 and SMAD3. Receptor for activin AB, activin B, activin E and NODAL. Upon NODAL binding, activation results in increased apoptosis and reduced proliferation through suppression of AKT signaling and the activation of Smad2-dependent signaling pathway in pancreatic beta-cells, trophoblasts, epithelial or neuronal cells. Acts as a positive regulator for macrophage activation partially through down-regulation of PPARG expression. The sequence is that of Activin receptor type-1C from Rattus norvegicus (Rat).